Here is an 81-residue protein sequence, read N- to C-terminus: MEKTVSRKVVVLAILLSLSCLCIAKASKGEEKTSGELRDVTPQRGGPCSYDNLCHNHCPGCKITQCVNGECVCLICYTPPL.

A signal peptide spans 1–26 (MEKTVSRKVVVLAILLSLSCLCIAKA). Cystine bridges form between Cys-48–Cys-66, Cys-54–Cys-71, and Cys-58–Cys-73.

It belongs to the DEFL family.

It is found in the secreted. The chain is Putative defensin-like protein 265 from Arabidopsis thaliana (Mouse-ear cress).